Here is a 96-residue protein sequence, read N- to C-terminus: Protein transport protein Sec61 subunit beta (96 aa).

Residues 1-17 (MPGPTPSGTNVGSSGRS) show a composition bias toward polar residues. Residues 1-54 (MPGPTPSGTNVGSSGRSPSKAVAARAAGSTVRQRKNASCGTRSAGRTTSAGTGG) form a disordered region. Pro2 bears the N-acetylproline mark. Topologically, residues 2-70 (PGPTPSGTNV…EDSPGLKVGP (69 aa)) are cytoplasmic. Residue Ser7 is modified to Phosphoserine. Thr9 carries the phosphothreonine modification. Ser13, Ser14, and Ser17 each carry phosphoserine. Cys39 is lipidated: S-palmitoyl cysteine. Over residues 40–50 (GTRSAGRTTSA) the composition is skewed to low complexity. A helical transmembrane segment spans residues 71–91 (VPVLVMSLLFIAAVFMLHIWG).

The protein belongs to the SEC61-beta family. The SEC61 channel-forming translocon complex consists of channel-forming core components SEC61A1, SEC61B and SEC61G and different auxiliary components such as SEC62 and SEC63. The SEC61 channel associates with the multi-pass translocon (MPT) complex. Interacts with TRAM1.

It localises to the endoplasmic reticulum membrane. In terms of biological role, component of SEC61 channel-forming translocon complex that mediates transport of signal peptide-containing precursor polypeptides across the endoplasmic reticulum (ER). Forms a ribosome receptor and a gated pore in the ER membrane, both functions required for cotranslational translocation of nascent polypeptides. The SEC61 channel is also involved in ER membrane insertion of transmembrane proteins: it mediates membrane insertion of the first few transmembrane segments of proteins, while insertion of subsequent transmembrane regions of multi-pass membrane proteins is mediated by the multi-pass translocon (MPT) complex. The SEC61 channel cooperates with the translocating protein TRAM1 to import nascent proteins into the ER. Required for PKD1/Polycystin-1 biogenesis. This is Protein transport protein Sec61 subunit beta from Mus musculus (Mouse).